The following is a 112-amino-acid chain: uncharacterized protein (112 aa).

The protein to Buchnera BU585.

This is an uncharacterized protein from Buchnera aphidicola subsp. Schizaphis graminum (strain Sg).